Reading from the N-terminus, the 3925-residue chain is Polyketide synthase ThaH (3925 aa).

A disordered region spans residues 1 to 56; that stretch reads MPRWRPTWLKRLSCPKQPRHPTHPKHPTHPKHPKHPKHPRHPKHPRISRRCSSASA. Basic residues predominate over residues 17-49; it reads QPRHPTHPKHPTHPKHPKHPKHPRHPKHPRISR. In terms of domain architecture, Carrier 1 spans 1073 to 1148; sequence GLVGGLEGEV…DIAGYIASAE (76 aa). Residue S1108 is modified to O-(pantetheine 4'-phosphoryl)serine. Residues 1166-1182 show a composition bias toward low complexity; that stretch reads AAVATPPGRPAGEAAGA. Positions 1166–1233 are disordered; the sequence is AAVATPPGRP…GEPARAASHG (68 aa). Basic and acidic residues predominate over residues 1183–1196; the sequence is QRDRAPRAADERAD. A compositionally biased stretch (low complexity) spans 1202–1216; sequence PSDAHASKAAAIDSR. The region spanning 1237–1667 is the Ketosynthase family 3 (KS3) 1 domain; sequence ADGLAIIGIA…GTNAHALVEA (431 aa). Active-site for beta-ketoacyl synthase 1 activity residues include C1413, H1549, and H1589. A disordered region spans residues 1679 to 1698; that stretch reads GATGAPDVPDAPDAPDAPDA. Positions 1844 to 1969 are N-terminal hotdog fold; it reads HPLLHRNVST…GHVQRIAEPA (126 aa). Residues 1844–2143 enclose the PKS/mFAS DH domain; sequence HPLLHRNVST…ARRFVREPAR (300 aa). H1873 serves as the catalytic Proton acceptor; for dehydratase activity. Residues 1983-2143 form a C-terminal hotdog fold region; sequence AAPRLSAARC…ARRFVREPAR (161 aa). The active-site Proton donor; for dehydratase activity is the D2043. 2 stretches are compositionally biased toward low complexity: residues 2594 to 2607 and 2632 to 2646; these read DDPA…AASS and PAAA…ASDA. Disordered stretches follow at residues 2594–2613 and 2619–2657; these read DDPA…LPEM and APAD…AAPA. The 74-residue stretch at 2664-2737 folds into the Carrier 2 domain; sequence EHALALLKRL…ELACYFVAHH (74 aa). S2698 is modified (O-(pantetheine 4'-phosphoryl)serine). The span at 2753–2768 shows a compositional bias: low complexity; that stretch reads LAPAPAQPLAPRAPSA. The tract at residues 2753–2841 is disordered; that stretch reads LAPAPAQPLA…AHAPAQASAP (89 aa). Over residues 2770–2779 the composition is skewed to basic and acidic residues; the sequence is PARDAARSLE. 2 stretches are compositionally biased toward low complexity: residues 2789–2813 and 2823–2841; these read GQEP…QASA and ETRT…ASAP. The Ketosynthase family 3 (KS3) 2 domain occupies 2847 to 3286; it reads AFDIAIVGLA…GSNAHLIVEE (440 aa). Residues C3022, H3157, and H3197 each act as for beta-ketoacyl synthase 2 activity in the active site. 2 stretches are compositionally biased toward low complexity: residues 3512-3524 and 3578-3592; these read ASTA…PSPA and AAAA…SSPS. 2 disordered regions span residues 3512–3531 and 3578–3619; these read ASTA…STGE and AAAA…AAPD. The span at 3593 to 3603 shows a compositional bias: pro residues; it reads PSSPSPLPSSP. Over residues 3604 to 3619 the composition is skewed to low complexity; the sequence is PRMSSRQHASPAAAPD. Residues 3622–3699 enclose the Carrier 3 domain; sequence AALLDIEAFL…AMARHVSSNA (78 aa). S3659 is modified (O-(pantetheine 4'-phosphoryl)serine). Residues 3734-3754 are disordered; it reads PAPFASAAPPEPPASPARADG. The Carrier 4 domain maps to 3762–3839; the sequence is TSLDAIRAHL…ALARFVGTQL (78 aa). The residue at position 3799 (S3799) is an O-(pantetheine 4'-phosphoryl)serine.

It belongs to the ATP-dependent AMP-binding enzyme family. The cofactor is pantetheine 4'-phosphate.

It is found in the cytoplasm. Its pathway is antibiotic biosynthesis. In terms of biological role, involved in production of the polyketide antibiotic thailandamide. The chain is Polyketide synthase ThaH from Burkholderia thailandensis (strain ATCC 700388 / DSM 13276 / CCUG 48851 / CIP 106301 / E264).